The sequence spans 335 residues: DNA-directed RNA polymerase subunit alpha (335 aa).

Positions 1-233 are alpha N-terminal domain (alpha-NTD); the sequence is MMLNATEFLT…QQISIFVDLE (233 aa). The tract at residues 247-335 is alpha C-terminal domain (alpha-CTD); the sequence is VDPVLLRPVD…VDDRFSYRSR (89 aa).

The protein belongs to the RNA polymerase alpha chain family. Homodimer. The RNAP catalytic core consists of 2 alpha, 1 beta, 1 beta' and 1 omega subunit. When a sigma factor is associated with the core the holoenzyme is formed, which can initiate transcription.

It carries out the reaction RNA(n) + a ribonucleoside 5'-triphosphate = RNA(n+1) + diphosphate. Functionally, DNA-dependent RNA polymerase catalyzes the transcription of DNA into RNA using the four ribonucleoside triphosphates as substrates. The polypeptide is DNA-directed RNA polymerase subunit alpha (Psychrobacter arcticus (strain DSM 17307 / VKM B-2377 / 273-4)).